Here is a 151-residue protein sequence, read N- to C-terminus: Ribosome maturation factor RimP (151 aa).

This sequence belongs to the RimP family.

It localises to the cytoplasm. In terms of biological role, required for maturation of 30S ribosomal subunits. The sequence is that of Ribosome maturation factor RimP from Caldanaerobacter subterraneus subsp. tengcongensis (strain DSM 15242 / JCM 11007 / NBRC 100824 / MB4) (Thermoanaerobacter tengcongensis).